Consider the following 131-residue polypeptide: Large ribosomal subunit protein bL17 (131 aa).

This sequence belongs to the bacterial ribosomal protein bL17 family. As to quaternary structure, part of the 50S ribosomal subunit. Contacts protein L32.

This chain is Large ribosomal subunit protein bL17, found in Chromobacterium violaceum (strain ATCC 12472 / DSM 30191 / JCM 1249 / CCUG 213 / NBRC 12614 / NCIMB 9131 / NCTC 9757 / MK).